Consider the following 347-residue polypeptide: UDP-N-acetylglucosamine--N-acetylmuramyl-(pentapeptide) pyrophosphoryl-undecaprenol N-acetylglucosamine transferase (347 aa).

Residues 11 to 13 (TGG), N122, R163, S189, and Q279 each bind UDP-N-acetyl-alpha-D-glucosamine.

Belongs to the glycosyltransferase 28 family. MurG subfamily.

Its subcellular location is the cell inner membrane. The catalysed reaction is di-trans,octa-cis-undecaprenyl diphospho-N-acetyl-alpha-D-muramoyl-L-alanyl-D-glutamyl-meso-2,6-diaminopimeloyl-D-alanyl-D-alanine + UDP-N-acetyl-alpha-D-glucosamine = di-trans,octa-cis-undecaprenyl diphospho-[N-acetyl-alpha-D-glucosaminyl-(1-&gt;4)]-N-acetyl-alpha-D-muramoyl-L-alanyl-D-glutamyl-meso-2,6-diaminopimeloyl-D-alanyl-D-alanine + UDP + H(+). It functions in the pathway cell wall biogenesis; peptidoglycan biosynthesis. In terms of biological role, cell wall formation. Catalyzes the transfer of a GlcNAc subunit on undecaprenyl-pyrophosphoryl-MurNAc-pentapeptide (lipid intermediate I) to form undecaprenyl-pyrophosphoryl-MurNAc-(pentapeptide)GlcNAc (lipid intermediate II). This is UDP-N-acetylglucosamine--N-acetylmuramyl-(pentapeptide) pyrophosphoryl-undecaprenol N-acetylglucosamine transferase from Sulfurihydrogenibium sp. (strain YO3AOP1).